The sequence spans 238 residues: Histone deacetylase 7 (238 aa).

2 disordered regions span residues Thr1–Ala26 and Gln47–Glu72. Residues Ser58–Pro158 form an interaction with MEF2A region. Residues Ser118 and Ser164 each carry the phosphoserine modification. Positions Pro145 to Gly238 are disordered. Positions Lys176–Ser190 are enriched in basic and acidic residues. Ser190 carries the phosphoserine; by PKD/PRKD2 modification. Residues Ser206–Pro221 are compositionally biased toward low complexity.

Belongs to the histone deacetylase family. HD type 2 subfamily. Interacts with HDAC1, HDAC2, HDAC3, HDAC4, HDAC5, NCOR1, NCOR2, SIN3A, SIN3B, RBBP4, RBBP7, MTA1L1, SAP30 and MBD3. Interacts with KAT5 and EDNRA. Interacts with the 14-3-3 protein YWHAE, MEF2A, MEF2B and MEF2C. Interacts with ZMYND15. Interacts with KDM5B. Interacts with PML. Interacts with FOXP3. Interacts with RARA. In terms of processing, may be phosphorylated by CaMK1. Phosphorylated by the PKC kinases PKN1 and PKN2, impairing nuclear import. Phosphorylation at Ser-164 by MARK2, MARK3 and PRKD1 promotes interaction with 14-3-3 proteins and export from the nucleus. Phosphorylation at Ser-164 is a prerequisite for phosphorylation at Ser-190.

It is found in the nucleus. The protein resides in the cytoplasm. It catalyses the reaction N(6)-acetyl-L-lysyl-[histone] + H2O = L-lysyl-[histone] + acetate. The catalysed reaction is N(6)-acetyl-L-lysyl-[protein] + H2O = L-lysyl-[protein] + acetate. Responsible for the deacetylation of lysine residues on the N-terminal part of the core histones (H2A, H2B, H3 and H4). Histone deacetylation gives a tag for epigenetic repression and plays an important role in transcriptional regulation, cell cycle progression and developmental events. Histone deacetylases act via the formation of large multiprotein complexes. Involved in muscle maturation by repressing transcription of myocyte enhancer factors such as MEF2A, MEF2B and MEF2C. During muscle differentiation, it shuttles into the cytoplasm, allowing the expression of myocyte enhancer factors. May be involved in Epstein-Barr virus (EBV) latency, possibly by repressing the viral BZLF1 gene. Positively regulates the transcriptional repressor activity of FOXP3. Serves as a corepressor of RARA, causing its deacetylation and inhibition of RARE DNA element binding. In association with RARA, plays a role in the repression of microRNA-10a and thereby in the inflammatory response. Also acetylates non-histone proteins, such as ALKBH5. The sequence is that of Histone deacetylase 7 (Hdac7) from Rattus norvegicus (Rat).